The following is a 502-amino-acid chain: L-arabinose isomerase (502 aa).

Mn(2+) contacts are provided by Glu306, Glu333, His350, and His449.

The protein belongs to the arabinose isomerase family. Mn(2+) is required as a cofactor.

The enzyme catalyses beta-L-arabinopyranose = L-ribulose. It functions in the pathway carbohydrate degradation; L-arabinose degradation via L-ribulose; D-xylulose 5-phosphate from L-arabinose (bacterial route): step 1/3. In terms of biological role, catalyzes the conversion of L-arabinose to L-ribulose. This Flavobacterium johnsoniae (strain ATCC 17061 / DSM 2064 / JCM 8514 / BCRC 14874 / CCUG 350202 / NBRC 14942 / NCIMB 11054 / UW101) (Cytophaga johnsonae) protein is L-arabinose isomerase.